The chain runs to 285 residues: Inositol oxygenase (285 aa).

Arg-29 is a substrate binding site. Position 33 is a phosphoserine (Ser-33). A substrate-binding site is contributed by 85 to 87 (DES). Positions 98, 123, and 124 each coordinate Fe cation. Residues Lys-127 and 141–142 (GD) contribute to the substrate site. Positions 194, 220, and 253 each coordinate Fe cation. 220-221 (HS) contacts substrate.

It belongs to the myo-inositol oxygenase family. Requires Fe cation as cofactor. As to expression, kidney specific.

It is found in the cytoplasm. The catalysed reaction is myo-inositol + O2 = D-glucuronate + H2O + H(+). It functions in the pathway polyol metabolism; myo-inositol degradation into D-glucuronate; D-glucuronate from myo-inositol: step 1/1. The chain is Inositol oxygenase (Miox) from Rattus norvegicus (Rat).